Consider the following 92-residue polypeptide: Small ribosomal subunit protein uS19 (92 aa).

This sequence belongs to the universal ribosomal protein uS19 family.

Functionally, protein S19 forms a complex with S13 that binds strongly to the 16S ribosomal RNA. This Borreliella afzelii (strain PKo) (Borrelia afzelii) protein is Small ribosomal subunit protein uS19.